Reading from the N-terminus, the 188-residue chain is Elongation factor P-like protein (188 aa).

It belongs to the elongation factor P family.

The sequence is that of Elongation factor P-like protein from Xanthomonas euvesicatoria pv. vesicatoria (strain 85-10) (Xanthomonas campestris pv. vesicatoria).